The sequence spans 370 residues: Protein-glutamate methylesterase/protein-glutamine glutaminase of group 1 operon (370 aa).

In terms of domain architecture, Response regulatory spans 4 to 121 (KVLVVDDSGF…SRNPDKVKQL (118 aa)). The residue at position 55 (Asp55) is a 4-aspartylphosphate. The segment covering 150-180 (PASTFTSQAQTRPAAPARAAAPTPAASQSPA) has biased composition (low complexity). The segment at 150–183 (PASTFTSQAQTRPAAPARAAAPTPAASQSPAPKR) is disordered. Positions 179-370 (PAPKRKPYKL…IGKHLVEACV (192 aa)) constitute a CheB-type methylesterase domain. Residues Ser194, His221, and Asp314 contribute to the active site.

It belongs to the CheB family. In terms of processing, phosphorylated by CheA. Phosphorylation of the N-terminal regulatory domain activates the methylesterase activity.

It is found in the cytoplasm. The enzyme catalyses [protein]-L-glutamate 5-O-methyl ester + H2O = L-glutamyl-[protein] + methanol + H(+). The catalysed reaction is L-glutaminyl-[protein] + H2O = L-glutamyl-[protein] + NH4(+). Its function is as follows. Involved in chemotaxis. Part of a chemotaxis signal transduction system that modulates chemotaxis in response to various stimuli. Catalyzes the demethylation of specific methylglutamate residues introduced into the chemoreceptors (methyl-accepting chemotaxis proteins or MCP) by CheR. Also mediates the irreversible deamidation of specific glutamine residues to glutamic acid. This is Protein-glutamate methylesterase/protein-glutamine glutaminase of group 1 operon from Pseudomonas putida (strain ATCC 47054 / DSM 6125 / CFBP 8728 / NCIMB 11950 / KT2440).